A 240-amino-acid chain; its full sequence is UDP-2,3-diacylglucosamine hydrolase (240 aa).

The Mn(2+) site is built by D7, H9, D40, N78, and H113. Position 78–79 (78–79 (NR)) interacts with substrate. Positions 121, 159, 163, 166, and 194 each coordinate substrate. Mn(2+)-binding residues include H194 and H196.

This sequence belongs to the LpxH family. Requires Mn(2+) as cofactor.

Its subcellular location is the cell inner membrane. It carries out the reaction UDP-2-N,3-O-bis[(3R)-3-hydroxytetradecanoyl]-alpha-D-glucosamine + H2O = 2-N,3-O-bis[(3R)-3-hydroxytetradecanoyl]-alpha-D-glucosaminyl 1-phosphate + UMP + 2 H(+). The protein operates within glycolipid biosynthesis; lipid IV(A) biosynthesis; lipid IV(A) from (3R)-3-hydroxytetradecanoyl-[acyl-carrier-protein] and UDP-N-acetyl-alpha-D-glucosamine: step 4/6. Hydrolyzes the pyrophosphate bond of UDP-2,3-diacylglucosamine to yield 2,3-diacylglucosamine 1-phosphate (lipid X) and UMP by catalyzing the attack of water at the alpha-P atom. Involved in the biosynthesis of lipid A, a phosphorylated glycolipid that anchors the lipopolysaccharide to the outer membrane of the cell. This chain is UDP-2,3-diacylglucosamine hydrolase, found in Pseudomonas putida (strain W619).